The following is a 152-amino-acid chain: Small ribosomal subunit protein uS15 (152 aa).

A compositionally biased stretch (basic residues) spans 1–11; that stretch reads MARMHARRRGK. Residues 1–25 form a disordered region; that stretch reads MARMHARRRGKSSSVRPARNEAPAW.

This sequence belongs to the universal ribosomal protein uS15 family. Part of the 30S ribosomal subunit.

The sequence is that of Small ribosomal subunit protein uS15 from Methanoregula boonei (strain DSM 21154 / JCM 14090 / 6A8).